A 521-amino-acid chain; its full sequence is Endoplasmic reticulum mannosyl-oligosaccharide 1,2-alpha-mannosidase (521 aa).

The Cytoplasmic segment spans residues 1–8 (MVKRRTVK). A helical; Signal-anchor for type II membrane protein membrane pass occupies residues 9-31 (YFLRRILALFVLCVPIYYLYTTV). Over 32 to 521 (QRPPGYTKLK…IENNMDLYTV (490 aa)) the chain is Lumenal. N-linked (GlcNAc...) asparagine glycosylation is found at Asn114, Asn167, Asn300, Asn342, and Asn378. A disulfide bond links Cys330 and Cys373. The Proton donor role is filled by Glu387. Asn499 is a glycosylation site (N-linked (GlcNAc...) asparagine). Thr504 lines the Ca(2+) pocket.

This sequence belongs to the glycosyl hydrolase 47 family. The cofactor is Ca(2+).

The protein localises to the membrane. It catalyses the reaction N(4)-(alpha-D-Man-(1-&gt;2)-alpha-D-Man-(1-&gt;2)-alpha-D-Man-(1-&gt;3)-[alpha-D-Man-(1-&gt;2)-alpha-D-Man-(1-&gt;3)-[alpha-D-Man-(1-&gt;2)-alpha-D-Man-(1-&gt;6)]-alpha-D-Man-(1-&gt;6)]-beta-D-Man-(1-&gt;4)-beta-D-GlcNAc-(1-&gt;4)-beta-D-GlcNAc)-L-asparaginyl-[protein] (N-glucan mannose isomer 9A1,2,3B1,2,3) + 4 H2O = N(4)-(alpha-D-Man-(1-&gt;3)-[alpha-D-Man-(1-&gt;3)-[alpha-D-Man-(1-&gt;6)]-alpha-D-Man-(1-&gt;6)]-beta-D-Man-(1-&gt;4)-beta-D-GlcNAc-(1-&gt;4)-beta-D-GlcNAc)-L-asparaginyl-[protein] (N-glucan mannose isomer 5A1,2) + 4 beta-D-mannose. The enzyme catalyses N(4)-(alpha-D-Man-(1-&gt;2)-alpha-D-Man-(1-&gt;2)-alpha-D-Man-(1-&gt;3)-[alpha-D-Man-(1-&gt;3)-[alpha-D-Man-(1-&gt;2)-alpha-D-Man-(1-&gt;6)]-alpha-D-Man-(1-&gt;6)]-beta-D-Man-(1-&gt;4)-beta-D-GlcNAc-(1-&gt;4)-beta-D-GlcNAc)-L-asparaginyl-[protein] (N-glucan mannose isomer 8A1,2,3B1,3) + 3 H2O = N(4)-(alpha-D-Man-(1-&gt;3)-[alpha-D-Man-(1-&gt;3)-[alpha-D-Man-(1-&gt;6)]-alpha-D-Man-(1-&gt;6)]-beta-D-Man-(1-&gt;4)-beta-D-GlcNAc-(1-&gt;4)-beta-D-GlcNAc)-L-asparaginyl-[protein] (N-glucan mannose isomer 5A1,2) + 3 beta-D-mannose. It functions in the pathway protein modification; protein glycosylation. Its activity is regulated as follows. Inhibited by kifunensine. Its function is as follows. Involved in glycoprotein quality control as it is important for the targeting of misfolded glycoproteins for degradation. It trims a single alpha-1,2-linked mannose residue from Man(9)GlcNAc(2) to produce Man(8)GlcNAc(2) with low efficiency. In Schizosaccharomyces pombe (strain 972 / ATCC 24843) (Fission yeast), this protein is Endoplasmic reticulum mannosyl-oligosaccharide 1,2-alpha-mannosidase.